The following is a 183-amino-acid chain: Translation initiation factor IF-3 (183 aa).

The protein belongs to the IF-3 family. Monomer.

The protein localises to the cytoplasm. In terms of biological role, IF-3 binds to the 30S ribosomal subunit and shifts the equilibrium between 70S ribosomes and their 50S and 30S subunits in favor of the free subunits, thus enhancing the availability of 30S subunits on which protein synthesis initiation begins. The sequence is that of Translation initiation factor IF-3 from Pseudomonas entomophila (strain L48).